Reading from the N-terminus, the 38-residue chain is Large ribosomal subunit protein bL36 (38 aa).

It belongs to the bacterial ribosomal protein bL36 family.

This is Large ribosomal subunit protein bL36 from Saccharophagus degradans (strain 2-40 / ATCC 43961 / DSM 17024).